The sequence spans 149 residues: Transcriptional repressor NrdR (149 aa).

The segment at 3–34 is a zinc-finger region; sequence CPFCSATDTKVIDSRLVAEGHQVRRRRECTEC. The ATP-cone domain occupies 49–139; it reads PRVIKRDGSR…VYRAFEDVSE (91 aa).

It belongs to the NrdR family. It depends on Zn(2+) as a cofactor.

Its function is as follows. Negatively regulates transcription of bacterial ribonucleotide reductase nrd genes and operons by binding to NrdR-boxes. This chain is Transcriptional repressor NrdR, found in Shewanella putrefaciens (strain CN-32 / ATCC BAA-453).